A 62-amino-acid polypeptide reads, in one-letter code: Large ribosomal subunit protein bL28 (62 aa).

This sequence belongs to the bacterial ribosomal protein bL28 family.

This Bacillus velezensis (strain DSM 23117 / BGSC 10A6 / LMG 26770 / FZB42) (Bacillus amyloliquefaciens subsp. plantarum) protein is Large ribosomal subunit protein bL28.